The following is a 460-amino-acid chain: NADH-ubiquinone oxidoreductase chain 4 (460 aa).

The next 13 membrane-spanning stretches (helical) occupy residues 22-42 (WLWPTALTQSMLIALGSITWL), 61-81 (PLSTPLLVLSCWLLPLMLLAS), 94-113 (RMYITLLATLQLFLILAFGA), 117-139 (IMFYVMFEATLIPTLLVITRWGN), 148-168 (TYFLFYTLAGSLPLLVALLML), 195-217 (IWWAACMIAFLVKMPLYGMHLWL), 225-245 (PVAGSMVLAAVLLKLGGYGMM), 258-278 (MVYPFIVLALWGVIITGSICL), 285-304 (SLIAYSSVSHMGLVAGGILI), 308-330 (WGFTGALILMIAHGLASSALFCL), 351-371 (IALPLMTTWWFIASLANLALP), 394-414 (LILTGIGTLITAAYSLYMFLM), and 436-456 (LLMALHLIPLLLIILKPALLW).

This sequence belongs to the complex I subunit 4 family.

Its subcellular location is the mitochondrion membrane. The enzyme catalyses a ubiquinone + NADH + 5 H(+)(in) = a ubiquinol + NAD(+) + 4 H(+)(out). Functionally, core subunit of the mitochondrial membrane respiratory chain NADH dehydrogenase (Complex I) that is believed to belong to the minimal assembly required for catalysis. Complex I functions in the transfer of electrons from NADH to the respiratory chain. The immediate electron acceptor for the enzyme is believed to be ubiquinone. The polypeptide is NADH-ubiquinone oxidoreductase chain 4 (MT-ND4) (Gadus morhua (Atlantic cod)).